The sequence spans 124 residues: Small ribosomal subunit protein uS12 (124 aa).

The interval 1-28 is disordered; sequence MPTISQLVGSERKRLTKKTKSPALKSCP. D89 is subject to 3-methylthioaspartic acid. Residues 104-124 form a disordered region; the sequence is TAGVKDRRQSRSKYGAKAPKD.

This sequence belongs to the universal ribosomal protein uS12 family. As to quaternary structure, part of the 30S ribosomal subunit. Contacts proteins S8 and S17. May interact with IF1 in the 30S initiation complex.

Functionally, with S4 and S5 plays an important role in translational accuracy. Its function is as follows. Interacts with and stabilizes bases of the 16S rRNA that are involved in tRNA selection in the A site and with the mRNA backbone. Located at the interface of the 30S and 50S subunits, it traverses the body of the 30S subunit contacting proteins on the other side and probably holding the rRNA structure together. The combined cluster of proteins S8, S12 and S17 appears to hold together the shoulder and platform of the 30S subunit. This chain is Small ribosomal subunit protein uS12, found in Prochlorococcus marinus (strain MIT 9301).